The primary structure comprises 150 residues: Globin (150 aa).

The Globin domain occupies 11 to 150 (PLSAAEKTKI…MICILLRSAY (140 aa)). Heme b-binding residues include His-74 and His-106.

It belongs to the globin family. As to quaternary structure, monomer.

The sequence is that of Globin from Lampetra fluviatilis (European river lamprey).